Reading from the N-terminus, the 260-residue chain is Tropinone reductase homolog At1g07450 (260 aa).

14-38 (LVTGGSKGIGYAIVEELVGFGARVH) serves as a coordination point for NADP(+). Ser147 provides a ligand contact to substrate. Tyr159 serves as the catalytic Proton acceptor.

It belongs to the short-chain dehydrogenases/reductases (SDR) family. SDR65C subfamily.

The protein is Tropinone reductase homolog At1g07450 of Arabidopsis thaliana (Mouse-ear cress).